Here is a 454-residue protein sequence, read N- to C-terminus: tRNA modification GTPase MnmE (454 aa).

(6S)-5-formyl-5,6,7,8-tetrahydrofolate contacts are provided by Arg-23, Glu-80, and Lys-120. Residues 216 to 377 (GMKVVIAGRP…LRNHLKQSMG (162 aa)) enclose the TrmE-type G domain. Position 226 (Asn-226) interacts with K(+). Residues 226 to 231 (NAGKSS), 245 to 251 (TDIAGTT), 270 to 273 (DTAG), 335 to 338 (NKAD), and 358 to 360 (SAR) each bind GTP. Residue Ser-230 participates in Mg(2+) binding. K(+) is bound by residues Thr-245, Ile-247, and Thr-250. Thr-251 contacts Mg(2+). Residue Lys-454 coordinates (6S)-5-formyl-5,6,7,8-tetrahydrofolate.

This sequence belongs to the TRAFAC class TrmE-Era-EngA-EngB-Septin-like GTPase superfamily. TrmE GTPase family. As to quaternary structure, homodimer. Heterotetramer of two MnmE and two MnmG subunits. K(+) is required as a cofactor.

The protein resides in the cytoplasm. Exhibits a very high intrinsic GTPase hydrolysis rate. Involved in the addition of a carboxymethylaminomethyl (cmnm) group at the wobble position (U34) of certain tRNAs, forming tRNA-cmnm(5)s(2)U34. This chain is tRNA modification GTPase MnmE, found in Klebsiella pneumoniae (strain 342).